The following is a 220-amino-acid chain: Thiamine-phosphate synthase (220 aa).

4-amino-2-methyl-5-(diphosphooxymethyl)pyrimidine is bound by residues 39-43 (QLRDK) and asparagine 80. Residues aspartate 81 and aspartate 100 each contribute to the Mg(2+) site. Serine 119 provides a ligand contact to 4-amino-2-methyl-5-(diphosphooxymethyl)pyrimidine. 145–147 (TPT) contributes to the 2-[(2R,5Z)-2-carboxy-4-methylthiazol-5(2H)-ylidene]ethyl phosphate binding site. Position 148 (lysine 148) interacts with 4-amino-2-methyl-5-(diphosphooxymethyl)pyrimidine. 2-[(2R,5Z)-2-carboxy-4-methylthiazol-5(2H)-ylidene]ethyl phosphate is bound at residue glycine 176.

This sequence belongs to the thiamine-phosphate synthase family. It depends on Mg(2+) as a cofactor.

The catalysed reaction is 2-[(2R,5Z)-2-carboxy-4-methylthiazol-5(2H)-ylidene]ethyl phosphate + 4-amino-2-methyl-5-(diphosphooxymethyl)pyrimidine + 2 H(+) = thiamine phosphate + CO2 + diphosphate. It carries out the reaction 2-(2-carboxy-4-methylthiazol-5-yl)ethyl phosphate + 4-amino-2-methyl-5-(diphosphooxymethyl)pyrimidine + 2 H(+) = thiamine phosphate + CO2 + diphosphate. It catalyses the reaction 4-methyl-5-(2-phosphooxyethyl)-thiazole + 4-amino-2-methyl-5-(diphosphooxymethyl)pyrimidine + H(+) = thiamine phosphate + diphosphate. Its pathway is cofactor biosynthesis; thiamine diphosphate biosynthesis; thiamine phosphate from 4-amino-2-methyl-5-diphosphomethylpyrimidine and 4-methyl-5-(2-phosphoethyl)-thiazole: step 1/1. In terms of biological role, condenses 4-methyl-5-(beta-hydroxyethyl)thiazole monophosphate (THZ-P) and 2-methyl-4-amino-5-hydroxymethyl pyrimidine pyrophosphate (HMP-PP) to form thiamine monophosphate (TMP). This is Thiamine-phosphate synthase from Mycobacterium ulcerans (strain Agy99).